We begin with the raw amino-acid sequence, 447 residues long: Transducin beta-like protein 2 (447 aa).

The disordered stretch occupies residues 38–72 (RSGRPACQKANGFPPDKSSGSKKQKQYQRIRKEKP). Basic residues predominate over residues 57-69 (GSKKQKQYQRIRK). WD repeat units follow at residues 88–127 (SHSGNISCMDFSSNGKYLATCADDRTIRIWSTKDFLQREH), 134–174 (VELD…DGGY), 186–226 (KHKA…STIN), 228–267 (NQMNNTHAAVSPCGRFVASCGFTPDVKVWEVCFGKKGEFQ), 277–316 (GHSAAVHSFAFSNDSRRMASVSKDGTWKLWDTDVEYKKKQ), 329–367 (AAGAAPCRLALSPNAQVLALASGSSIHLYNTRRGEKEEC), and 371–409 (VHGECIANLSFDITGRFLASCGDRAVRLFHNTPGHRAMV). Lysine 168 participates in a covalent cross-link: Glycyl lysine isopeptide (Lys-Gly) (interchain with G-Cter in SUMO2). Threonine 433 carries the phosphothreonine; by ATM or ATR modification.

The polypeptide is Transducin beta-like protein 2 (TBL2) (Homo sapiens (Human)).